A 3014-amino-acid polypeptide reads, in one-letter code: Cadherin EGF LAG seven-pass G-type receptor 1 (3014 aa).

Residues 1–20 (MAPPPPPVLPVLLLLAAAAA) form the signal peptide. Over 22-2469 (PAMGLRAAAW…RENGEVLPLK (2448 aa)) the chain is Extracellular. Residues 205 to 242 (AGTPSASPSPSPPLPPNLPEARAGPARRARRGTSGRGS) form a disordered region. Over residues 211 to 222 (SPSPSPPLPPNL) the composition is skewed to pro residues. Cadherin domains lie at 246–353 (PMPN…SPVF), 354–459 (EQSE…YPQF), 460–565 (SEQN…EPIF), 566–687 (VSSP…DPVF), 688–789 (TQPT…RPVF), 790–892 (QSSH…APQF), 893–999 (LWDF…APMF), 1000–1101 (EKDE…PPVL), and 1106–1224 (ILFN…SPLL). Asn-403, Asn-546, Asn-634, and Asn-778 each carry an N-linked (GlcNAc...) asparagine glycan. N-linked (GlcNAc...) asparagine glycans are attached at residues Asn-1114, Asn-1139, Asn-1213, Asn-1249, Asn-1259, and Asn-1287. The region spanning 1303-1361 (DDNICLREPCENYMKCVSVLRFDSSAPFLSSTTVLFRPIHPINGLRCRCPPGFTGDYCE) is the EGF-like 1; calcium-binding domain. 9 disulfide bridges follow: Cys-1307–Cys-1318, Cys-1312–Cys-1349, Cys-1351–Cys-1360, Cys-1367–Cys-1378, Cys-1372–Cys-1387, Cys-1389–Cys-1398, Cys-1407–Cys-1418, Cys-1412–Cys-1428, and Cys-1430–Cys-1440. One can recognise an EGF-like 2; calcium-binding domain in the interval 1363–1399 (EIDLCYSDPCGANGRCRSREGGYTCECFEDFTGEHCE). Positions 1403-1441 (RSGRCANGVCKNGGTCVNLLIGGFHCVCPPGEYERPYCE) constitute an EGF-like 3; calcium-binding domain. In terms of domain architecture, Laminin G-like 1 spans 1442–1646 (VTTRSFPPQS…IANNGTREGC (205 aa)). N-linked (GlcNAc...) asparagine glycosylation is found at Asn-1576, Asn-1623, and Asn-1640. Disulfide bonds link Cys-1620/Cys-1646, Cys-1653/Cys-1664, Cys-1658/Cys-1673, Cys-1675/Cys-1684, Cys-1840/Cys-1870, Cys-1876/Cys-1887, Cys-1881/Cys-1896, Cys-1898/Cys-1907, Cys-1911/Cys-1922, Cys-1916/Cys-1934, Cys-1936/Cys-1945, Cys-1953/Cys-1966, and Cys-1968/Cys-1978. Positions 1649-1685 (RRNFCDGRRCQNGGTCVNRWNMYLCECPLRFGGKNCE) constitute an EGF-like 4; calcium-binding domain. Asn-1666 is subject to (3R)-3-hydroxyasparagine. Residues 1689 to 1870 (PHPQLFSGES…ALKVRVKDGC (182 aa)) enclose the Laminin G-like 2 domain. In terms of domain architecture, EGF-like 5; calcium-binding spans 1872–1907 (VDDPCTSSPCPPNSRCHDAWEDYSCVCDKGYLGINC). Asp-1889 carries the (3R)-3-hydroxyaspartate modification. Positions 1908–1946 (VDACHLNPCENMGACVRSPGSPQGYVCECGPSHYGPYCE) constitute an EGF-like 6; calcium-binding domain. The 33-residue stretch at 1947–1979 (NKLDLPCPRGWWGNPVCGPCHCAVSKGFDPDCN) folds into the EGF-like 7; calcium-binding domain. N-linked (GlcNAc...) asparagine glycosylation occurs at Asn-1979. In terms of domain architecture, EGF-like 8; calcium-binding spans 1981-2016 (TNGQCQCKENYYKLLAQDTCLPCDCFPHGSHSRTCD). Disulfide bonds link Cys-1985–Cys-2000, Cys-1987–Cys-2003, Cys-2005–Cys-2015, Cys-2024–Cys-2033, and Cys-2036–Cys-2048. The Laminin EGF-like domain occupies 2003–2050 (CDCFPHGSHSRTCDMATGQCACKPGVIGRQCNRCDNPFAEVTTLGCEV). 3 N-linked (GlcNAc...) asparagine glycosylation sites follow: Asn-2103, Asn-2122, and Asn-2257. Residues 2291 to 2328 (PEEKEGPLLRPAGRRTTPQTTRPGPGTEREAPISRRRR) form a disordered region. A GAIN-B domain is found at 2297 to 2461 (PLLRPAGRRT…AVLMDISRRE (165 aa)). Residues 2300–2316 (RPAGRRTTPQTTRPGPG) show a composition bias toward low complexity. Cystine bridges form between Cys-2411/Cys-2443 and Cys-2431/Cys-2445. The tract at residues 2411–2461 (CVFWNHSLAVGGTGGWSARGCELLSRNRTHVACQCSHTASFAVLMDISRRE) is GPS. Residues Asn-2415 and Asn-2437 are each glycosylated (N-linked (GlcNAc...) asparagine). Residues 2470-2490 (IVTYAAVSLSLAALLVAFVLL) form a helical membrane-spanning segment. At 2491-2501 (SLVRMLRSNLH) the chain is on the cytoplasmic side. The chain crosses the membrane as a helical span at residues 2502–2522 (SIHKHLAVALFLSQLVFVIGI). An N-linked (GlcNAc...) asparagine glycan is attached at Asn-2523. At 2523-2527 (NQTEN) the chain is on the extracellular side. A helical membrane pass occupies residues 2528–2548 (PFLCTVVAILLHYIYMSTFAW). Residues 2549 to 2572 (TLVESLHVYRMLTEVRNIDTGPMR) lie on the Cytoplasmic side of the membrane. Residues 2573-2593 (FYYVVGWGIPAIVTGLAVGLD) traverse the membrane as a helical segment. Topologically, residues 2594–2611 (PQGYGNPDFCWLSLQDTL) are extracellular. The chain crosses the membrane as a helical span at residues 2612–2632 (IWSFAGPIGAVIIINTVTSVL). Residues 2633 to 2655 (SAKVSCQRKHHYYGKKGIVSLLR) lie on the Cytoplasmic side of the membrane. Residues 2656–2676 (TAFLLLLLISATWLLGLLAVN) form a helical membrane-spanning segment. Residues 2677–2683 (RDALSFH) are Extracellular-facing. A helical membrane pass occupies residues 2684 to 2704 (YLFAIFSGLQGPFVLLFHCVL). Residues 2705 to 3014 (NQEVRKHLKG…QADGSDSEKP (310 aa)) are Cytoplasmic-facing. Ser-2761 and Ser-2764 each carry phosphoserine. Disordered stretches follow at residues 2777–2939 (SSGL…PPPL) and 2954–3014 (LADC…SEKP). Positions 2796-2806 (SCKDPPGHDSD) are enriched in basic and acidic residues. Over residues 2814 to 2825 (DEQSSSYASSHS) the composition is skewed to low complexity. 2 positions are modified to phosphoserine: Ser-2871 and Ser-2873. The span at 2876-2904 (PSGKPRLKVETKVSVELHREEQGSHRGEY) shows a compositional bias: basic and acidic residues. Over residues 2960-2969 (SPTSSRTSSL) the composition is skewed to low complexity. The span at 2983–2992 (PGREPGRDHL) shows a compositional bias: basic and acidic residues.

Belongs to the G-protein coupled receptor 2 family. LN-TM7 subfamily. The iron and 2-oxoglutarate dependent 3-hydroxylation of aspartate and asparagine is (R) stereospecific within EGF domains.

The protein localises to the cell membrane. Receptor that may have an important role in cell/cell signaling during nervous system formation. The protein is Cadherin EGF LAG seven-pass G-type receptor 1 (CELSR1) of Homo sapiens (Human).